The primary structure comprises 484 residues: Cobyric acid synthase (484 aa).

Residues 253-430 (SLRVAVVRFP…WHGAFEHDEF (178 aa)) enclose the GATase cobBQ-type domain. The active-site Nucleophile is C334. The active site involves H422.

It belongs to the CobB/CobQ family. CobQ subfamily.

It participates in cofactor biosynthesis; adenosylcobalamin biosynthesis. Its function is as follows. Catalyzes amidations at positions B, D, E, and G on adenosylcobyrinic A,C-diamide. NH(2) groups are provided by glutamine, and one molecule of ATP is hydrogenolyzed for each amidation. The protein is Cobyric acid synthase of Cutibacterium acnes (strain DSM 16379 / KPA171202) (Propionibacterium acnes).